Consider the following 321-residue polypeptide: Olfactory receptor 52N2 (321 aa).

The Extracellular segment spans residues 1–27 (MSGDNSSSLTPGFFILNGVPGLEATHI). An N-linked (GlcNAc...) asparagine glycan is attached at asparagine 5. The chain crosses the membrane as a helical span at residues 28–48 (WISLPFCFMYIIAVVGNCGLI). At 49–56 (CLISHEEA) the chain is on the cytoplasmic side. The helical transmembrane segment at 57 to 77 (LHRPMYYFLALLSFTDVTLCT) threads the bilayer. Over 78-101 (TMVPNMLCIFWFNLKEIDFNACLA) the chain is Extracellular. Cysteine 99 and cysteine 191 are oxidised to a cystine. Residues 102-122 (QMFFVHMLTGMESGVLMLMAL) traverse the membrane as a helical segment. Topologically, residues 123 to 141 (DRYVAICYPLRYATILTNP) are cytoplasmic. The helical transmembrane segment at 142 to 162 (VIAKAGLATFLRNVMLIIPFT) threads the bilayer. At 163-198 (LLTKRLPYCRGNFIPHTYCDHMSVAKVSCGNFKVNA) the chain is on the extracellular side. A helical transmembrane segment spans residues 199-219 (IYGLMVALLIGVFDICCISVS). At 220 to 239 (YTMILQAVMSLSSADARHKA) the chain is on the cytoplasmic side. A helical membrane pass occupies residues 240–260 (FSTCTSHMCSIVITYVAAFFT). Over 261-276 (FFTHRFVGHNIPNHIH) the chain is Extracellular. The chain crosses the membrane as a helical span at residues 277-297 (IIVANLYLLLPPTMNPIVYGV). The Cytoplasmic portion of the chain corresponds to 298 to 321 (KTKQIQEGVIKFLLGDKVSFTYDK).

Belongs to the G-protein coupled receptor 1 family.

The protein resides in the cell membrane. Functionally, odorant receptor. The chain is Olfactory receptor 52N2 (OR52N2) from Homo sapiens (Human).